A 617-amino-acid chain; its full sequence is ATP-dependent rRNA helicase SPB4 (617 aa).

Residues Trp-7 to Ala-35 carry the Q motif motif. In terms of domain architecture, Helicase ATP-binding spans Ile-38–Ile-224. Residue Ser-51 to Thr-58 coordinates ATP. A DEAD box motif is present at residues Asp-172–Asp-175. Residues Asn-252–Ser-406 enclose the Helicase C-terminal domain.

It belongs to the DEAD box helicase family. DDX55/SPB4 subfamily. As to quaternary structure, component of pre-60S ribosomal complexes.

The protein localises to the nucleus. Its subcellular location is the nucleolus. It catalyses the reaction ATP + H2O = ADP + phosphate + H(+). ATP-binding RNA helicase involved in the biogenesis of 60S ribosomal subunits. Binds 90S pre-ribosomal particles and dissociates from pre-60S ribosomal particles after processing of 27SB pre-rRNA. Required for the normal formation of 18S rRNA through the processing of pre-rRNAs at sites A0, A1 and A2, and the normal formation of 25S and 5.8S rRNAs through the processing of pre-rRNAs at sites C1 and C2. In Candida glabrata (strain ATCC 2001 / BCRC 20586 / JCM 3761 / NBRC 0622 / NRRL Y-65 / CBS 138) (Yeast), this protein is ATP-dependent rRNA helicase SPB4.